Consider the following 238-residue polypeptide: ATP synthase subunit a (238 aa).

5 consecutive transmembrane segments (helical) span residues 18-38 (LTLLAVCIVTIAVIFAFVFWA), 76-96 (YSLLLFTIFLFVAVANNLGLF), 114-134 (NLAFDLALSLFITLMVHIEGV), 166-186 (SLAIRLFGNIFAGEVVTGLIV), and 193-213 (VYWWPIAFLVNMAWTAFSVFI).

It belongs to the ATPase A chain family. In terms of assembly, F-type ATPases have 2 components, CF(1) - the catalytic core - and CF(0) - the membrane proton channel. CF(1) has five subunits: alpha(3), beta(3), gamma(1), delta(1), epsilon(1). CF(0) has three main subunits: a(1), b(2) and c(9-12). The alpha and beta chains form an alternating ring which encloses part of the gamma chain. CF(1) is attached to CF(0) by a central stalk formed by the gamma and epsilon chains, while a peripheral stalk is formed by the delta and b chains.

It localises to the cell membrane. Functionally, key component of the proton channel; it plays a direct role in the translocation of protons across the membrane. The sequence is that of ATP synthase subunit a from Streptococcus pyogenes serotype M49 (strain NZ131).